The chain runs to 96 residues: MHQEYWILEVKVTPKSKQNTIVGFEGEVLKIRVTEVPEKGKANEAVIALLAKALSLPKRDITLIPGDTSRKKRILLPKSTESIVSHWREKGFYAGL.

It belongs to the UPF0235 family.

The protein is UPF0235 protein CAB243 of Chlamydia abortus (strain DSM 27085 / S26/3) (Chlamydophila abortus).